Here is a 337-residue protein sequence, read N- to C-terminus: Glyceraldehyde-3-phosphate dehydrogenase 3, cytosolic (337 aa).

Residues 1-151 (MAKIKIGING…YKSDINIVSN (151 aa)) form a binding to NAD region. NAD(+)-binding positions include 13 to 14 (RI), Asp-35, and Arg-82. Positions 152–337 (ASCTTNCLAP…DLIRHMNSTK (186 aa)) are catalytic. D-glyceraldehyde 3-phosphate-binding positions include 153 to 155 (SCT), Thr-184, 213 to 214 (TG), and Arg-236. Cys-154 acts as the Nucleophile in catalysis. NAD(+) is bound at residue Asn-318.

Belongs to the glyceraldehyde-3-phosphate dehydrogenase family. Homotetramer.

The protein localises to the cytoplasm. The enzyme catalyses D-glyceraldehyde 3-phosphate + phosphate + NAD(+) = (2R)-3-phospho-glyceroyl phosphate + NADH + H(+). It functions in the pathway carbohydrate degradation; glycolysis; pyruvate from D-glyceraldehyde 3-phosphate: step 1/5. Its function is as follows. Key enzyme in glycolysis that catalyzes the first step of the pathway by converting D-glyceraldehyde 3-phosphate (G3P) into 3-phospho-D-glyceroyl phosphate. Essential for the maintenance of cellular ATP levels and carbohydrate metabolism. The polypeptide is Glyceraldehyde-3-phosphate dehydrogenase 3, cytosolic (GAPC3) (Zea mays (Maize)).